The sequence spans 363 residues: UDP-3-O-acylglucosamine N-acyltransferase (363 aa).

His-266 (proton acceptor) is an active-site residue.

Belongs to the transferase hexapeptide repeat family. LpxD subfamily. Homotrimer.

The catalysed reaction is a UDP-3-O-[(3R)-3-hydroxyacyl]-alpha-D-glucosamine + a (3R)-hydroxyacyl-[ACP] = a UDP-2-N,3-O-bis[(3R)-3-hydroxyacyl]-alpha-D-glucosamine + holo-[ACP] + H(+). The protein operates within bacterial outer membrane biogenesis; LPS lipid A biosynthesis. Catalyzes the N-acylation of UDP-3-O-acylglucosamine using 3-hydroxyacyl-ACP as the acyl donor. Is involved in the biosynthesis of lipid A, a phosphorylated glycolipid that anchors the lipopolysaccharide to the outer membrane of the cell. This chain is UDP-3-O-acylglucosamine N-acyltransferase, found in Bordetella bronchiseptica (strain ATCC BAA-588 / NCTC 13252 / RB50) (Alcaligenes bronchisepticus).